The sequence spans 318 residues: Electron transfer flavoprotein subunit alpha (318 aa).

257-285 (LYIALGISGAIQHRAGMQTSKTIVAVNKD) is a binding site for FAD.

This sequence belongs to the ETF alpha-subunit/FixB family. As to quaternary structure, heterodimer of an alpha and a beta subunit. Requires FAD as cofactor.

In terms of biological role, the electron transfer flavoprotein serves as a specific electron acceptor for other dehydrogenases. It transfers the electrons to the main respiratory chain via ETF-ubiquinone oxidoreductase (ETF dehydrogenase). The sequence is that of Electron transfer flavoprotein subunit alpha (etfA) from Mycobacterium leprae (strain TN).